A 587-amino-acid polypeptide reads, in one-letter code: Beta-(1--&gt;2)glucan export ATP-binding/permease protein NdvA (587 aa).

Residues 21–301 enclose the ABC transmembrane type-1 domain; that stretch reads VSLVVIANIV…MRQFATQIFE (281 aa). Helical transmembrane passes span 23–43, 57–77, 126–146, 158–178, 248–268, and 272–292; these read LVVI…ILFG, PILF…VLVS, LFGL…ALAL, LSAV…VVMS, MAST…VQSG, and IGDV…LDLM. The ABC transporter domain maps to 335–569; the sequence is IEFRDVSFGF…NGRFAALLRA (235 aa). 368–375 lines the ATP pocket; the sequence is GPTGAGKT.

This sequence belongs to the ABC transporter superfamily. Beta-(1--&gt;2)glucan exporter (TC 3.A.1.108.1) family. As to quaternary structure, homodimer.

It is found in the cell inner membrane. The enzyme catalyses [(1-&gt;2)-beta-D-glucosyl](n)(in) + ATP + H2O = [(1-&gt;2)-beta-D-glucosyl](n)(out) + ADP + phosphate + H(+). Involved in beta-(1--&gt;2)glucan export. Transmembrane domains (TMD) form a pore in the inner membrane and the ATP-binding domain (NBD) is responsible for energy generation. The protein is Beta-(1--&gt;2)glucan export ATP-binding/permease protein NdvA of Rhizobium etli (strain ATCC 51251 / DSM 11541 / JCM 21823 / NBRC 15573 / CFN 42).